Consider the following 354-residue polypeptide: uncharacterized protein (354 aa).

Polar residues predominate over residues 309-326 (VNSANSINTANTRSQTGG). The disordered stretch occupies residues 309–333 (VNSANSINTANTRSQTGGQDEEDFE). The stretch at 326 to 353 (GQDEEDFEKKYKKYKNKYAKLKNQKTSN) forms a coiled coil.

The protein localises to the virion. This is an uncharacterized protein from Acanthamoeba polyphaga (Amoeba).